A 170-amino-acid chain; its full sequence is Inosine/xanthosine triphosphatase (170 aa).

It belongs to the YjjX NTPase family. In terms of assembly, homodimer. Mg(2+) is required as a cofactor. Requires Mn(2+) as cofactor.

It catalyses the reaction XTP + H2O = XDP + phosphate + H(+). It carries out the reaction ITP + H2O = IDP + phosphate + H(+). In terms of biological role, phosphatase that hydrolyzes non-canonical purine nucleotides such as XTP and ITP to their respective diphosphate derivatives. Probably excludes non-canonical purines from DNA/RNA precursor pool, thus preventing their incorporation into DNA/RNA and avoiding chromosomal lesions. This is Inosine/xanthosine triphosphatase from Aliivibrio fischeri (strain ATCC 700601 / ES114) (Vibrio fischeri).